Consider the following 1278-residue polypeptide: SMC5-SMC6 complex localization factor protein 2 (1278 aa).

Disordered regions lie at residues 1-235 (MTRR…LGAR), 248-337 (EQKK…KRTE), 443-491 (RINS…FIRH), and 509-582 (EPED…KETK). Basic and acidic residues predominate over residues 39–50 (KRTESPGDRKQS). The segment covering 94-103 (SSPKKLKPKR) has biased composition (basic residues). 4 stretches are compositionally biased toward basic and acidic residues: residues 118–133 (GGKE…ESRR), 156–174 (LPKE…ERRK), 180–199 (ESNR…DSRK), and 248–258 (EQKKLRKEQME). 2 stretches are compositionally biased toward polar residues: residues 259 to 277 (QRIN…SLKS) and 318 to 329 (SDSWELSGSKQN). Composition is skewed to basic and acidic residues over residues 449-463 (KEQR…KSTK) and 469-489 (KARE…EKFI). Polar residues predominate over residues 519–540 (ADSAPSNAGHHSSRNSDQVHSA). Residue Ser-591 is modified to Phosphoserine. 3 disordered regions span residues 598–724 (PLNA…EEEE), 739–764 (RTPT…MKEY), and 798–820 (IRQG…DDGD). Over residues 609–630 (PKKDKERSSSKERSGHSTESSK) the composition is skewed to basic and acidic residues. Composition is skewed to low complexity over residues 643 to 654 (SNESSGKNSGGS), 666 to 675 (PPAALEVVPS), and 688 to 697 (SGNSNAGSNA). Residues 707 to 724 (DSDEESLGYTLESDEEEE) are compositionally biased toward acidic residues. Residues Ser-708, Ser-712, and Ser-719 each carry the phosphoserine modification. Residues 740–1278 (TPTTSGKPPA…QLHDFWVPDS (539 aa)) are interaction with SIMC1. The NSE6-like domain stretch occupies residues 769–1271 (TYTNTLERLV…NCRPTQGQLH (503 aa)). Positions 807-1278 (PLRTGDQDST…QLHDFWVPDS (472 aa)) are required for interaction with SLF1 and RAD18.

This sequence belongs to the FAM178 family. As to quaternary structure, forms a heterodimer with SIMC1. Interacts with SLF1 (via N-terminus); this interaction links RAD18 to the SMC5-SMC6 complex. Interacts with RAD18; this interaction is increased in a SLF1-dependent manner. Interacts with SMC5 and SMC6.

It localises to the nucleus. It is found in the PML body. Its function is as follows. Plays a role in the DNA damage response (DDR) pathway by regulating postreplication repair of UV-damaged DNA and genomic stability maintenance. The SLF1-SLF2 complex acts to link RAD18 with the SMC5-SMC6 complex at replication-coupled interstrand cross-links (ICL) and DNA double-strand breaks (DSBs) sites on chromatin during DNA repair in response to stalled replication forks. Promotes the recruitment of the SMC5-SMC6 complex to DNA lesions. May play a role in SMC5-SMC6 complex recruitment for viral restriction. Forms a complex with SIMC1 and this complex is required to recruit SMC5-SMC6 complex to PML nuclear bodies and sites of viral replication. This Mus musculus (Mouse) protein is SMC5-SMC6 complex localization factor protein 2.